Reading from the N-terminus, the 502-residue chain is 4,4'-diapophytoene desaturase (4,4'-diaponeurosporene-forming) (502 aa).

An FAD-binding site is contributed by 5–17; it reads VIGAGVTGLAAAA.

Belongs to the carotenoid/retinoid oxidoreductase family. CrtN subfamily.

It carries out the reaction 15-cis-4,4'-diapophytoene + 3 FAD + 3 H(+) = all-trans-4,4'-diaponeurosporene + 3 FADH2. The protein operates within carotenoid biosynthesis; staphyloxanthin biosynthesis; staphyloxanthin from farnesyl diphosphate: step 2/5. Involved in the biosynthesis of the yellow-orange carotenoid staphyloxanthin, which plays a role in the virulence via its protective function against oxidative stress. Catalyzes three successive dehydrogenation reactions that lead to the introduction of three double bonds into 4,4'-diapophytoene (dehydrosqualene), with 4,4'-diapophytofluene and 4,4'-diapo-zeta-carotene as intermediates, and 4,4'-diaponeurosporene (the major deep-yellow pigment in staphylococci strains) as the end product. The chain is 4,4'-diapophytoene desaturase (4,4'-diaponeurosporene-forming) from Staphylococcus aureus (strain MRSA252).